The chain runs to 345 residues: Opioid-binding protein/cell adhesion molecule (345 aa).

The first 27 residues, 1 to 27 (MGVCGYLFLPWKCLVVVSLRLLFLVPT), serve as a signal peptide directing secretion. Ig-like C2-type domains follow at residues 39-126 (PKAM…PKTS), 136-219 (PQIM…VKIT), and 223-310 (PPYI…ASIT). Residues Asn44, Asn70, and Asn140 are each glycosylated (N-linked (GlcNAc...) asparagine). Cysteines 57 and 115 form a disulfide. Cystine bridges form between Cys157–Cys202 and Cys244–Cys296. N-linked (GlcNAc...) asparagine glycans are attached at residues Asn285, Asn293, and Asn306. Asn322 is lipidated: GPI-anchor amidated asparagine. The propeptide at 323 to 345 (SASRALACLWLSGTLLAHFFIKF) is removed in mature form.

It belongs to the immunoglobulin superfamily. IgLON family.

The protein resides in the cell membrane. Its function is as follows. Binds opioids in the presence of acidic lipids; probably involved in cell contact. This is Opioid-binding protein/cell adhesion molecule (OPCML) from Homo sapiens (Human).